Consider the following 148-residue polypeptide: uncharacterized protein (148 aa).

The segment covering 1 to 17 (MCPPVRQRPAQAPPAKR) has biased composition (low complexity). 2 disordered regions span residues 1–86 (MCPP…VQSP) and 122–148 (RAHR…TSPC). The segment covering 38 to 57 (RPPKMQRRPRPPVAKRRRFP) has biased composition (basic residues). Over residues 134–148 (QSRQRPSPDSQTSPC) the composition is skewed to polar residues.

The protein belongs to the Epstein-Barr virus BLLF2 family.

This is an uncharacterized protein from Homo sapiens (Human).